Reading from the N-terminus, the 458-residue chain is tRNA modification GTPase MnmE (458 aa).

3 residues coordinate (6S)-5-formyl-5,6,7,8-tetrahydrofolate: Arg26, Glu88, and Arg127. The 155-residue stretch at 224-378 folds into the TrmE-type G domain; the sequence is GLSTAIIGRP…IEDRINQLFF (155 aa). Residue Asn234 coordinates K(+). Residues 234–239, 253–259, and 278–281 contribute to the GTP site; these read NVGKSS, TDIAGTT, and DTAG. Mg(2+) is bound at residue Ser238. Positions 253, 255, and 258 each coordinate K(+). Thr259 is a binding site for Mg(2+). (6S)-5-formyl-5,6,7,8-tetrahydrofolate is bound at residue Lys458.

It belongs to the TRAFAC class TrmE-Era-EngA-EngB-Septin-like GTPase superfamily. TrmE GTPase family. As to quaternary structure, homodimer. Heterotetramer of two MnmE and two MnmG subunits. K(+) is required as a cofactor.

It localises to the cytoplasm. Its function is as follows. Exhibits a very high intrinsic GTPase hydrolysis rate. Involved in the addition of a carboxymethylaminomethyl (cmnm) group at the wobble position (U34) of certain tRNAs, forming tRNA-cmnm(5)s(2)U34. This chain is tRNA modification GTPase MnmE, found in Streptococcus pyogenes serotype M4 (strain MGAS10750).